The chain runs to 465 residues: MLDDRARMEAAKKEKVEQILAEFQLQEEDLKKVMRRMQKEMDRGLRLETHEEASVKMLPTYVRSTPEGSEVGDFLSLDLGGTNFRVMLVKVGEGEEGQWSVKTKHQMYSIPEDAMTGTAEMLFDYISECISDFLDKHQMKHKKLPLGFTFSFPVRHEDIDKGILLNWTKGFKASGAEGNNVVGLLRDAIKRRGDFEMDVVAMVNDTVATMISCYYEDHQCEVGMIVGTGCNACYMEEMQNVELVEGDEGRMCVNTEWGAFGDSGELDEFLLEYDRLVDESSANPGQQLYEKLIGGKYMGELVRLVLLRLVDENLLFHGEASEQLRTRGAFETRFVSQVESDTGDRKQIYNILSTLGLRPSTTDCDIVRRACESVSTRAAHMCSAGLAGVINRMRESRSEDVMRITVGVDGSVYKLHPSFKERFHASVRRLTPSCEITFIESEEGSGRGAALVSAVACKKACMLGQ.

Residues 10 to 454 enclose the Hexokinase domain; that stretch reads AAKKEKVEQI…SGRGAALVSA (445 aa). Positions 67 to 203 are hexokinase small subdomain; the sequence is EGSEVGDFLS…DFEMDVVAMV (137 aa). 78-83 lines the ATP pocket; sequence DLGGTN. Residues 151-152, 168-169, and 204-205 each bind substrate; these read SF, TK, and ND. Positions 204-443 are hexokinase large subdomain; the sequence is NDTVATMISC…CEITFIESEE (240 aa). Thr-228 is an ATP binding site. Residues Asn-231, Glu-256, and Glu-290 each coordinate substrate. ATP contacts are provided by residues 295-296, 332-336, and 411-415; these read GK, TRFVS, and SVYKL.

The protein belongs to the hexokinase family. In terms of assembly, monomer. Interacts with MIDN; the interaction occurs preferentially at low glucose levels and results in inhibition of hexokinase activity. Interacts with GCKR; leading to sequestration in the nucleus.

The protein localises to the cytoplasm. Its subcellular location is the nucleus. It localises to the mitochondrion. It catalyses the reaction a D-hexose + ATP = a D-hexose 6-phosphate + ADP + H(+). It carries out the reaction D-fructose + ATP = D-fructose 6-phosphate + ADP + H(+). The catalysed reaction is D-glucose + ATP = D-glucose 6-phosphate + ADP + H(+). The enzyme catalyses D-mannose + ATP = D-mannose 6-phosphate + ADP + H(+). It participates in carbohydrate metabolism; hexose metabolism. It functions in the pathway carbohydrate degradation; glycolysis; D-glyceraldehyde 3-phosphate and glycerone phosphate from D-glucose: step 1/4. Subject to allosteric regulation. Low glucose and high fructose-6-phosphate triggers association with the inhibitor GCKR followed by sequestration in the nucleus. Its function is as follows. Catalyzes the phosphorylation of hexose, such as D-glucose, D-fructose and D-mannose, to hexose 6-phosphate (D-glucose 6-phosphate, D-fructose 6-phosphate and D-mannose 6-phosphate, respectively). Compared to other hexokinases, has a weak affinity for D-glucose, and is effective only when glucose is abundant. Mainly expressed in pancreatic beta cells and the liver and constitutes a rate-limiting step in glucose metabolism in these tissues. Since insulin secretion parallels glucose metabolism and the low glucose affinity of GCK ensures that it can change its enzymatic activity within the physiological range of glucose concentrations, GCK acts as a glucose sensor in the pancreatic beta cell. In pancreas, plays an important role in modulating insulin secretion. In liver, helps to facilitate the uptake and conversion of glucose by acting as an insulin-sensitive determinant of hepatic glucose usage. Required to provide D-glucose 6-phosphate for the synthesis of glycogen. Mediates the initial step of glycolysis by catalyzing phosphorylation of D-glucose to D-glucose 6-phosphate. This is Hexokinase-4 from Homo sapiens (Human).